Consider the following 782-residue polypeptide: MDSIGINRAPLGSSSSAAAVTARRGIALRPARRSVASTNRVGVATIGFGDASGLRACSEKVRRFDSVRSTTARAQNGNAGRSMTEERGCTMSDTEMPFKYSSGKAFPLGVSQVEGGLNFALFSQHASSVILCLKLPGRGTEDEKGADVVEFVLDQQKNKTGDIWHVIVEGLPASGVLYGYRVGGPQGWDQGHRFDSSTVLLDPYAKLVSGRKYFGVAEEKSSQHFGTYDFDSSPFDWGDDYRLPNLPEADLVIYEMNVRAFTADESSGLDSTSRGSYLGLIDKIPHLLELGVNAVELLPVFEYDELEFKRYPNPRDHMVNTWGYSTINFFAPMSRYASAGGGPVAASKELKQMVKELHKAGIEVILDVVYNHTNEADDAHPYMTSFRGIDNKVYYMLDLNKNAELLNFSGCGNTLNCNHPVVKELILDSLRHWVEEYHIDGFRFDLASVLCRGPDGCPLDAPPLIKEIAKDAVLSRCKIIAEPWDCGGLYLVGRFPNWDRWAEWNGKYRDDLRRFIKGDPGMKGVFATRVSGSADLYQVNERKPYHGVNFVIAHDGFTLCDLVSYNLKHNDANGEGGCDGCNDNFSWNCGVEGETNDLNVLSLRSRQMKNFHVALMISQGTPMMLMGDEYGHTRYGNNNSYGHDTCINNFQWEQLEQRRDGHFRFFSEMIKFRHSNPILRRDRFLNKNDVTWHEDCWENQESKFLAFTVHDHNSGGDIYLAFNAHDYFVDAVIPPPPHHKCWNRVVDTNLESPNDIVPEGVPFTGPKYRIAPYSSILLKAKP.

Residues 1-68 constitute a chloroplast transit peptide; sequence MDSIGINRAP…EKVRRFDSVR (68 aa). The span at 68–81 shows a compositional bias: polar residues; the sequence is RSTTARAQNGNAGR. Residues 68-88 form a disordered region; that stretch reads RSTTARAQNGNAGRSMTEERG. The Nucleophile role is filled by aspartate 445. Glutamate 482 acts as the Proton donor in catalysis.

It belongs to the glycosyl hydrolase 13 family. As to expression, expressed in leaves. Expressed at low levels in developing endosperm.

Its subcellular location is the plastid. The protein localises to the chloroplast. It localises to the amyloplast. The enzyme catalyses Hydrolysis of (1-&gt;6)-alpha-D-glucosidic branch linkages in glycogen, amylopectin and their beta-limit dextrins.. In terms of biological role, starch-debranching enzyme that plays a role in the degradation of transitory starch during the night in leaf blades, facilitates the formation of spherical amyloplasts containing compound granules in the endosperm, and affects morphological characteristics of plastids. The sequence is that of Isoamylase 3, chloroplastic from Oryza sativa subsp. japonica (Rice).